The chain runs to 90 residues: Putative membrane protein insertion efficiency factor (90 aa).

The protein belongs to the UPF0161 family.

It localises to the cell membrane. Its function is as follows. Could be involved in insertion of integral membrane proteins into the membrane. The sequence is that of Putative membrane protein insertion efficiency factor from Lactococcus lactis subsp. cremoris (strain MG1363).